The chain runs to 221 residues: Membrane protein 0 (221 aa).

The tract at residues Met1–Gly22 is disordered. The PPXY motif signature appears at Pro44–Tyr47. A helical membrane pass occupies residues Phe100–Phe120.

It belongs to the varicellovirus ORF0 protein family. In terms of assembly, interacts with host ITCH; this interaction probably mediates ITCH degradation.

It is found in the host Golgi apparatus membrane. The sequence is that of Membrane protein 0 from Homo sapiens (Human).